The chain runs to 572 residues: Urease subunit alpha (572 aa).

The 442-residue stretch at 131-572 (GGIDAHIHFI…LPLAQRYFLF (442 aa)) folds into the Urease domain. The Ni(2+) site is built by H136, H138, and K219. An N6-carboxylysine modification is found at K219. H221 is a substrate binding site. H248 and H274 together coordinate Ni(2+). The active-site Proton donor is the H322. Residue D362 participates in Ni(2+) binding.

This sequence belongs to the metallo-dependent hydrolases superfamily. Urease alpha subunit family. As to quaternary structure, heterotrimer of UreA (gamma), UreB (beta) and UreC (alpha) subunits. Three heterotrimers associate to form the active enzyme. Ni cation is required as a cofactor. Carboxylation allows a single lysine to coordinate two nickel ions.

Its subcellular location is the cytoplasm. It catalyses the reaction urea + 2 H2O + H(+) = hydrogencarbonate + 2 NH4(+). Its pathway is nitrogen metabolism; urea degradation; CO(2) and NH(3) from urea (urease route): step 1/1. The sequence is that of Urease subunit alpha from Thermosynechococcus vestitus (strain NIES-2133 / IAM M-273 / BP-1).